A 493-amino-acid polypeptide reads, in one-letter code: MSELTSLTIAEAREKLVSKDITAVELTDAYLGAIEAANGAINAYVTVTPEIARDMAKASDARLATGKAGALEGIPLGVKDLFATRDVHTQACSNILDGFKPKYESTVTQNLWNEGAVMLGKLNMDEFAMGSSNENSFYGPVVNPWRATGSEEKLVPGGSSGGSAAAVAARLCAGATASDTGGSIRQPAAFTGTVGIKPTYGRCSRWGIVAYASSLDQAGPIARDVRDAAILLKSMASIDEKDTTSVDLLAPNYEAAIGQSVKGMKIGIPREYRVDGMPEEIEALWQKGMAWLKEAGAEIVDISLPHTKYALPAYYIVASAEASSNLARYDGVRYGLRVDGKDIADMYEKSRAAGFGKEVQRRILMGTYVLSAGYYDAYYLRAQKVRTLIKRDFEQVFAAGVDAILTPITPSSAFAIGDKDLAADPVKMYLNDIFSVTLNMAGLPGLSVPAGLDAKGLPLGLQLIGKPFEEETLFKTAHVIEQAAGKFTPAQWW.

Active-site charge relay system residues include Lys79 and Ser159. Ser183 (acyl-ester intermediate) is an active-site residue.

The protein belongs to the amidase family. GatA subfamily. As to quaternary structure, heterotrimer of A, B and C subunits.

The enzyme catalyses L-glutamyl-tRNA(Gln) + L-glutamine + ATP + H2O = L-glutaminyl-tRNA(Gln) + L-glutamate + ADP + phosphate + H(+). Allows the formation of correctly charged Gln-tRNA(Gln) through the transamidation of misacylated Glu-tRNA(Gln) in organisms which lack glutaminyl-tRNA synthetase. The reaction takes place in the presence of glutamine and ATP through an activated gamma-phospho-Glu-tRNA(Gln). In Allorhizobium ampelinum (strain ATCC BAA-846 / DSM 112012 / S4) (Agrobacterium vitis (strain S4)), this protein is Glutamyl-tRNA(Gln) amidotransferase subunit A.